A 307-amino-acid chain; its full sequence is UDP-N-acetylenolpyruvoylglucosamine reductase (307 aa).

The FAD-binding PCMH-type domain occupies 34 to 197 (VGGNAEALFR…LSASLKGRPG (164 aa)). Arg177 is a catalytic residue. The active-site Proton donor is Ser226. The active site involves Glu296.

Belongs to the MurB family. The cofactor is FAD.

Its subcellular location is the cytoplasm. It carries out the reaction UDP-N-acetyl-alpha-D-muramate + NADP(+) = UDP-N-acetyl-3-O-(1-carboxyvinyl)-alpha-D-glucosamine + NADPH + H(+). It participates in cell wall biogenesis; peptidoglycan biosynthesis. Its function is as follows. Cell wall formation. This Paramagnetospirillum magneticum (strain ATCC 700264 / AMB-1) (Magnetospirillum magneticum) protein is UDP-N-acetylenolpyruvoylglucosamine reductase.